We begin with the raw amino-acid sequence, 275 residues long: Lysosome-associated membrane glycoprotein 5 (275 aa).

The signal sequence occupies residues 1 to 18 (MEFQLLLLCSVWALGVCA). Over 19–228 (EQEVENLSGL…VTDQREQLEQ (210 aa)) the chain is Extracellular. N-linked (GlcNAc...) asparagine glycans are attached at residues Asn24 and Asn42. A helical transmembrane segment spans residues 229 to 249 (TLPLVLGLILGLIIVITISVY). The Cytoplasmic segment spans residues 250–275 (HFHLKLNAAHTQQPTLPRDRSLYKNM).

This sequence belongs to the LAMP family. Glycosylated.

Its subcellular location is the cytoplasmic vesicle membrane. It is found in the cell membrane. The protein localises to the cell projection. The protein resides in the dendrite. It localises to the cytoplasmic vesicle. Its subcellular location is the secretory vesicle. It is found in the synaptic vesicle membrane. The protein localises to the growth cone membrane. The protein resides in the early endosome membrane. It localises to the recycling endosome. Its subcellular location is the endoplasmic reticulum-Golgi intermediate compartment membrane. It is found in the endosome membrane. Plays a role in short-term synaptic plasticity in a subset of GABAergic neurons in the brain. This is Lysosome-associated membrane glycoprotein 5 (lamp5) from Danio rerio (Zebrafish).